We begin with the raw amino-acid sequence, 597 residues long: Alkyldihydroxyacetonephosphate synthase (597 aa).

Residues 131–313 form the FAD-binding PCMH-type domain; that stretch reads IPRLPDIVVW…SEVTIKIFPI (183 aa). FAD is bound by residues 163-169, 232-238, 245-248, and 297-303; these read PIGGGTS, DSIEFST, TRAS, and EGTLGVV. A substrate-binding site is contributed by arginine 444. Tyrosine 507 (proton donor/acceptor) is an active-site residue. The segment at 544–546 is important for enzyme activity; it reads HHH. Residues 595–597 carry the Microbody targeting signal motif; that stretch reads CKL.

Belongs to the FAD-binding oxidoreductase/transferase type 4 family. In terms of assembly, homodimer. Requires FAD as cofactor.

Its subcellular location is the peroxisome. It carries out the reaction a long chain fatty alcohol + a 1-acylglycerone 3-phosphate = a 1-O-alkylglycerone 3-phosphate + a long-chain fatty acid + H(+). The protein operates within glycerolipid metabolism; ether lipid biosynthesis. In terms of biological role, catalyzes the exchange of an acyl for a long-chain alkyl group and the formation of the ether bond in the biosynthesis of ether phospholipids. This Caenorhabditis elegans protein is Alkyldihydroxyacetonephosphate synthase (ads-1).